The sequence spans 293 residues: Pyridoxal 5'-phosphate synthase subunit PdxS (293 aa).

Aspartate 25 lines the D-ribose 5-phosphate pocket. The active-site Schiff-base intermediate with D-ribose 5-phosphate is lysine 82. A D-ribulose 5-phosphate-binding site is contributed by aspartate 103. A D-ribose 5-phosphate-binding site is contributed by glycine 154. Arginine 166 provides a ligand contact to D-glyceraldehyde 3-phosphate. D-ribose 5-phosphate is bound by residues glycine 215 and 236–237 (GS).

Belongs to the PdxS/SNZ family. In terms of assembly, homohexamer and homododecamer. In the presence of PdxT, forms a dodecamer of heterodimers.

It catalyses the reaction aldehydo-D-ribose 5-phosphate + D-glyceraldehyde 3-phosphate + L-glutamine = pyridoxal 5'-phosphate + L-glutamate + phosphate + 3 H2O + H(+). Its pathway is cofactor biosynthesis; pyridoxal 5'-phosphate biosynthesis. Catalyzes the formation of pyridoxal 5'-phosphate from ribose 5-phosphate (RBP), glyceraldehyde 3-phosphate (G3P) and ammonia. The ammonia is provided by the PdxT subunit. Can also use ribulose 5-phosphate and dihydroxyacetone phosphate as substrates, resulting from enzyme-catalyzed isomerization of RBP and G3P, respectively. This is Pyridoxal 5'-phosphate synthase subunit PdxS from Thermotoga maritima (strain ATCC 43589 / DSM 3109 / JCM 10099 / NBRC 100826 / MSB8).